Reading from the N-terminus, the 251-residue chain is Ubiquinone/menaquinone biosynthesis C-methyltransferase UbiE (251 aa).

S-adenosyl-L-methionine is bound by residues Thr74, Asp95, 123–124 (NA), and Ser140.

The protein belongs to the class I-like SAM-binding methyltransferase superfamily. MenG/UbiE family.

It catalyses the reaction a 2-demethylmenaquinol + S-adenosyl-L-methionine = a menaquinol + S-adenosyl-L-homocysteine + H(+). The catalysed reaction is a 2-methoxy-6-(all-trans-polyprenyl)benzene-1,4-diol + S-adenosyl-L-methionine = a 5-methoxy-2-methyl-3-(all-trans-polyprenyl)benzene-1,4-diol + S-adenosyl-L-homocysteine + H(+). The protein operates within quinol/quinone metabolism; menaquinone biosynthesis; menaquinol from 1,4-dihydroxy-2-naphthoate: step 2/2. It participates in cofactor biosynthesis; ubiquinone biosynthesis. In terms of biological role, methyltransferase required for the conversion of demethylmenaquinol (DMKH2) to menaquinol (MKH2) and the conversion of 2-polyprenyl-6-methoxy-1,4-benzoquinol (DDMQH2) to 2-polyprenyl-3-methyl-6-methoxy-1,4-benzoquinol (DMQH2). This Serratia proteamaculans (strain 568) protein is Ubiquinone/menaquinone biosynthesis C-methyltransferase UbiE.